Here is a 241-residue protein sequence, read N- to C-terminus: Glutathione S-transferase omega-1 (241 aa).

S2 bears the N-acetylserine mark. One can recognise a GST N-terminal domain in the interval G22–K101. The active-site Nucleophile is the C32. K57 is subject to N6-acetyllysine. Residues K59, V72, and E85 to S86 each bind glutathione. Residues D106 to L228 enclose the GST C-terminal domain. S129 carries the phosphoserine modification. An N6-acetyllysine mark is found at K143, K148, and K152.

It belongs to the GST superfamily. Omega family. In terms of assembly, homodimer.

It localises to the cytoplasm. The protein resides in the cytosol. It carries out the reaction RX + glutathione = an S-substituted glutathione + a halide anion + H(+). The enzyme catalyses L-dehydroascorbate + 2 glutathione = glutathione disulfide + L-ascorbate. The catalysed reaction is methylarsonate + 2 glutathione + H(+) = methylarsonous acid + glutathione disulfide + H2O. In terms of biological role, exhibits glutathione-dependent thiol transferase and dehydroascorbate reductase activities. Has S-(phenacyl)glutathione reductase activity. Also has glutathione S-transferase activity. Participates in the biotransformation of inorganic arsenic and reduces monomethylarsonic acid (MMA) and dimethylarsonic acid. The chain is Glutathione S-transferase omega-1 (Gsto1) from Rattus norvegicus (Rat).